The chain runs to 209 residues: Probable nicotinate-nucleotide adenylyltransferase (209 aa).

Belongs to the NadD family.

It catalyses the reaction nicotinate beta-D-ribonucleotide + ATP + H(+) = deamido-NAD(+) + diphosphate. It participates in cofactor biosynthesis; NAD(+) biosynthesis; deamido-NAD(+) from nicotinate D-ribonucleotide: step 1/1. Its function is as follows. Catalyzes the reversible adenylation of nicotinate mononucleotide (NaMN) to nicotinic acid adenine dinucleotide (NaAD). The protein is Probable nicotinate-nucleotide adenylyltransferase of Shewanella woodyi (strain ATCC 51908 / MS32).